The following is a 308-amino-acid chain: NADH-cytochrome b5 reductase 1 (308 aa).

The helical transmembrane segment at 10-27 (INGVYIPSALLIFGTTII) threads the bilayer. The FAD-binding FR-type domain maps to 59 to 164 (TEFQNFVLKD…RGPKGAMVYT (106 aa)). FAD is bound by residues 144-159 (TTLR…GPKG) and 170-207 (HIGM…QIDL).

It belongs to the flavoprotein pyridine nucleotide cytochrome reductase family. In terms of assembly, monomer. Component of the 2-(3-amino-3-carboxypropyl)histidine synthase complex composed of DPH1, DPH2, DPH3 and a NADH-dependent reductase, predominantly CBR1. The cofactor is FAD.

The protein localises to the mitochondrion outer membrane. It catalyses the reaction 2 Fe(III)-[cytochrome b5] + NADH = 2 Fe(II)-[cytochrome b5] + NAD(+) + H(+). The enzyme catalyses 2 Fe(3+)-[Dph3] + NADH = 2 Fe(2+)-[Dph3] + NAD(+) + H(+). Its pathway is protein modification; peptidyl-diphthamide biosynthesis. In terms of biological role, NADH-dependent reductase for DPH3 and cytochrome b5. Required for the first step of diphthamide biosynthesis, a post-translational modification of histidine which occurs in elongation factor 2. DPH1 and DPH2 transfer a 3-amino-3-carboxypropyl (ACP) group from S-adenosyl-L-methionine (SAM) to a histidine residue, the reaction is assisted by a reduction system comprising DPH3 and a NADH-dependent reductase, predominantly CBR1. By reducing DPH3, also involved in the formation of the tRNA wobble base modification mcm5s 2U (5-methoxycarbonylmethyl-2-thiouridine), mediated by the elongator complex. The cytochrome b5/NADH cytochrome b5 reductase electron transfer system supports the catalytic activity of several sterol biosynthetic enzymes. The chain is NADH-cytochrome b5 reductase 1 (CBR1) from Coccidioides immitis (strain RS) (Valley fever fungus).